The primary structure comprises 58 residues: Keratin-associated protein 21-3 (58 aa).

Interacts with hair keratins.

In the hair cortex, hair keratin intermediate filaments are embedded in an interfilamentous matrix, consisting of hair keratin-associated proteins (KRTAP), which are essential for the formation of a rigid and resistant hair shaft through their extensive disulfide bond cross-linking with abundant cysteine residues of hair keratins. The matrix proteins include the high-sulfur and high-glycine-tyrosine keratins. In Homo sapiens (Human), this protein is Keratin-associated protein 21-3 (KRTAP21-3).